We begin with the raw amino-acid sequence, 159 residues long: Ribosomal RNA large subunit methyltransferase H (159 aa).

S-adenosyl-L-methionine contacts are provided by residues Leu76, Gly108, and 127–132 (FGLLTF).

It belongs to the RNA methyltransferase RlmH family. In terms of assembly, homodimer.

The protein resides in the cytoplasm. It carries out the reaction pseudouridine(1915) in 23S rRNA + S-adenosyl-L-methionine = N(3)-methylpseudouridine(1915) in 23S rRNA + S-adenosyl-L-homocysteine + H(+). Functionally, specifically methylates the pseudouridine at position 1915 (m3Psi1915) in 23S rRNA. This chain is Ribosomal RNA large subunit methyltransferase H, found in Streptococcus thermophilus (strain CNRZ 1066).